The following is a 98-amino-acid chain: Small ribosomal subunit protein bS20 (98 aa).

A compositionally biased stretch (basic residues) spans 1–12 (MAPRKPSKKVGP). Positions 1–31 (MAPRKPSKKVGPQKRPSAEKRVITSKKKQLR) are disordered.

It belongs to the bacterial ribosomal protein bS20 family.

Its function is as follows. Binds directly to 16S ribosomal RNA. The chain is Small ribosomal subunit protein bS20 from Chlamydia trachomatis serovar L2 (strain ATCC VR-902B / DSM 19102 / 434/Bu).